The primary structure comprises 168 residues: Photosystem I assembly protein Ycf3 (168 aa).

3 TPR repeats span residues 35-68 (AFTY…EIDP), 72-105 (SYIL…NPFL), and 120-153 (GEQA…TPGN).

It belongs to the Ycf3 family.

Its subcellular location is the plastid. The protein resides in the chloroplast thylakoid membrane. In terms of biological role, essential for the assembly of the photosystem I (PSI) complex. May act as a chaperone-like factor to guide the assembly of the PSI subunits. In Daucus carota (Wild carrot), this protein is Photosystem I assembly protein Ycf3.